The primary structure comprises 432 residues: Adenylosuccinate synthetase (432 aa).

GTP-binding positions include 13-19 (GDEGKGK) and 41-43 (GHT). The active-site Proton acceptor is aspartate 14. Mg(2+)-binding residues include aspartate 14 and glycine 41. IMP is bound by residues 14 to 17 (DEGK), 39 to 42 (NAGH), threonine 130, arginine 144, glutamine 225, threonine 240, and arginine 304. Histidine 42 (proton donor) is an active-site residue. Substrate is bound at residue 300 to 306 (ATTGRSR). GTP-binding positions include arginine 306, 332–334 (KLD), and 415–417 (STG).

Belongs to the adenylosuccinate synthetase family. In terms of assembly, homodimer. It depends on Mg(2+) as a cofactor.

Its subcellular location is the cytoplasm. The enzyme catalyses IMP + L-aspartate + GTP = N(6)-(1,2-dicarboxyethyl)-AMP + GDP + phosphate + 2 H(+). The protein operates within purine metabolism; AMP biosynthesis via de novo pathway; AMP from IMP: step 1/2. Functionally, plays an important role in the de novo pathway of purine nucleotide biosynthesis. Catalyzes the first committed step in the biosynthesis of AMP from IMP. This chain is Adenylosuccinate synthetase, found in Yersinia enterocolitica serotype O:8 / biotype 1B (strain NCTC 13174 / 8081).